The chain runs to 62 residues: Conotoxin Pn-014 (62 aa).

Positions 1 to 22 (MRCLPVFVILLLLIASAPSVDA) are cleaved as a signal peptide. Positions 23-48 (RPKTKDDIPLVSFQDHAKRILQTFES) are excised as a propeptide. Residue Trp-61 is modified to Tryptophan amide.

Belongs to the conotoxin T superfamily. In terms of processing, contains 2 disulfide bonds that can be either 'C1-C3, C2-C4' or 'C1-C4, C2-C3', since these disulfide connectivities have been observed for conotoxins with cysteine framework V (for examples, see AC P0DQQ7 and AC P81755). As to expression, expressed by the venom duct.

Its subcellular location is the secreted. The chain is Conotoxin Pn-014 from Conus pennaceus (Feathered cone).